Reading from the N-terminus, the 93-residue chain is Small ribosomal subunit protein bS18c (93 aa).

The protein belongs to the bacterial ribosomal protein bS18 family. Part of the 30S ribosomal subunit.

The protein localises to the plastid. It localises to the chloroplast. The protein is Small ribosomal subunit protein bS18c of Pinus koraiensis (Korean pine).